A 920-amino-acid chain; its full sequence is Chitin synthase C (920 aa).

Disordered stretches follow at residues 1-41 (MSYN…NAYQ) and 140-173 (IPMLQQDNPFGPDPYSDEYQVEEQADGHTPSPAP). Over residues 154–163 (YSDEYQVEEQ) the composition is skewed to acidic residues. 5 helical membrane passes run 466-486 (SAFGFISVLPGAFSAYRFVAL), 564-584 (RWLNGSFFAAVYAIAHFYQIW), 608-628 (LFAWFGIGNFFLVFHILTTYL), 640-660 (VLGVVFEWLYLATLVTCFVLA), and 675-695 (MVYFWIGIMIYLAFACIFVTV). An N-linked (GlcNAc...) asparagine glycan is attached at asparagine 715. The next 4 membrane-spanning stretches (helical) occupy residues 718 to 738 (FFTIIVSLGSTYVMWFVASII), 749 to 769 (FIQYILLTPTYINVLNIYAFC), 847 to 867 (AVVLAWVFCNFALGAVVLSAA), and 892 to 912 (VVLWSVAGLSIFKFIGALWYL).

This sequence belongs to the chitin synthase family. Class I subfamily.

The protein localises to the cell membrane. It carries out the reaction [(1-&gt;4)-N-acetyl-beta-D-glucosaminyl](n) + UDP-N-acetyl-alpha-D-glucosamine = [(1-&gt;4)-N-acetyl-beta-D-glucosaminyl](n+1) + UDP + H(+). Its function is as follows. Polymerizes chitin, a structural polymer of the cell wall and septum, by transferring the sugar moiety of UDP-GlcNAc to the non-reducing end of the growing chitin polymer. Involved in hyphal growth. This Aspergillus oryzae (strain ATCC 42149 / RIB 40) (Yellow koji mold) protein is Chitin synthase C.